The chain runs to 272 residues: 3',5'-cyclic adenosine monophosphate phosphodiesterase CpdA (272 aa).

Fe cation is bound by residues aspartate 21, histidine 23, aspartate 63, asparagine 93, histidine 161, histidine 200, and histidine 202. AMP-binding positions include histidine 23, aspartate 63, and 93-94 (NH). Histidine 202 contributes to the AMP binding site.

This sequence belongs to the cyclic nucleotide phosphodiesterase class-III family. In terms of assembly, monomer. It depends on a divalent metal cation as a cofactor.

It carries out the reaction 3',5'-cyclic AMP + H2O = AMP + H(+). With respect to regulation, activated by iron. Other divalent metal ions have no effect. Its function is as follows. Hydrolyzes cAMP to 5'-AMP. Plays an important regulatory role in modulating the intracellular concentration of cAMP, thereby influencing cAMP-dependent processes. Specifically required for regulation of virulence factors. Can also hydrolyze cGMP, but cGMP is unlikely to be synthesized by P.aeruginosa and cAMP is probably the biologically relevant substrate for CpdA in vivo. This Pseudomonas aeruginosa protein is 3',5'-cyclic adenosine monophosphate phosphodiesterase CpdA.